Here is a 124-residue protein sequence, read N- to C-terminus: Large ribosomal subunit protein bL12 (124 aa).

Residues 99 to 124 (KEGMNKEDAEKAKADLEAAGAKVELK) form a disordered region. Over residues 101 to 114 (GMNKEDAEKAKADL) the composition is skewed to basic and acidic residues. The span at 115–124 (EAAGAKVELK) shows a compositional bias: low complexity.

It belongs to the bacterial ribosomal protein bL12 family. In terms of assembly, homodimer. Part of the ribosomal stalk of the 50S ribosomal subunit. Forms a multimeric L10(L12)X complex, where L10 forms an elongated spine to which 2 to 4 L12 dimers bind in a sequential fashion. Binds GTP-bound translation factors.

Functionally, forms part of the ribosomal stalk which helps the ribosome interact with GTP-bound translation factors. Is thus essential for accurate translation. In Campylobacter hominis (strain ATCC BAA-381 / DSM 21671 / CCUG 45161 / LMG 19568 / NCTC 13146 / CH001A), this protein is Large ribosomal subunit protein bL12.